The sequence spans 305 residues: tRNA pseudouridine synthase B (305 aa).

Asp39 functions as the Nucleophile in the catalytic mechanism.

This sequence belongs to the pseudouridine synthase TruB family. Type 1 subfamily.

It carries out the reaction uridine(55) in tRNA = pseudouridine(55) in tRNA. Its function is as follows. Responsible for synthesis of pseudouridine from uracil-55 in the psi GC loop of transfer RNAs. The sequence is that of tRNA pseudouridine synthase B from Staphylococcus aureus (strain MSSA476).